Here is a 573-residue protein sequence, read N- to C-terminus: Sulfite reductase [NADPH] hemoprotein beta-component (573 aa).

Cysteine 438, cysteine 444, cysteine 483, and cysteine 487 together coordinate [4Fe-4S] cluster. Cysteine 487 contributes to the siroheme binding site.

This sequence belongs to the nitrite and sulfite reductase 4Fe-4S domain family. Alpha(8)-beta(8). The alpha component is a flavoprotein, the beta component is a hemoprotein. Siroheme serves as cofactor. [4Fe-4S] cluster is required as a cofactor.

The catalysed reaction is hydrogen sulfide + 3 NADP(+) + 3 H2O = sulfite + 3 NADPH + 4 H(+). Its pathway is sulfur metabolism; hydrogen sulfide biosynthesis; hydrogen sulfide from sulfite (NADPH route): step 1/1. Its function is as follows. Component of the sulfite reductase complex that catalyzes the 6-electron reduction of sulfite to sulfide. This is one of several activities required for the biosynthesis of L-cysteine from sulfate. The protein is Sulfite reductase [NADPH] hemoprotein beta-component of Nitrosomonas eutropha (strain DSM 101675 / C91 / Nm57).